An 843-amino-acid chain; its full sequence is MSFNLEDTLESDWVAVRPNVFEEKERRKFVFIVAWNEVEGKFAITCHNRTAQRQRSADKAGGRSPARQQQRDSPAQSPARKAREEPEEGEEEECSWAGLFSFQDLRAVHQQLCSVSSELEPCLPTFPEEPSGVWSVLFGPSELSEAEVEDLGRQLRLYLGHALDTSGWKILSQVLFADSDDPEEYYQSLSELRHKGYEEGLQRARKRLQELLEKHKTTEVMVDLLDLYQLEDEAYSNVVEATTELYQYLLQPFRDMRELAMLRRQQIKISIENDYLGPRRIESLKKEDADWQKKAHMAVLSIQDLTVKYFEITARAQKAVFDRMRGDQKKFGKTAWAAAVERVEKLQYGVAKETLQLMRAKEICLEQKKHALKDQMQSLQGGTEAIAVLDELEADYYDHQLQLYEVQFEILKCEELLLTAQLESIKRQISEKTDEVVYYDTYESMEAMLATEDMAASIHIQRVELQKLQQKVRQLEAKRGRISAKKAYLRNKKEICIAKHSEKIQQRLHSDEGYRAAQLKQEKQEDEEERKSTWVSQERQKTLDRLRTFKQRHPGQVVLKSTRLRFSHERRRSTIRTTSSTDAPQSLSVSIQTQGLSDLGDTEVLQPIKTQKPETTTQLEDSSLPPNAITSELPLMTSLPTFTHEKLEPEISTLQPSSLPASPPPPPPPLPPPPPPPLPPSKQDTDTLEIRVIHVKKETEEKDGAKPVSGPLAQLFDSSQLLNARKTLKKTGALEGIQRRRVSSPMDEVLASLKRGSFHLKKVEQRALPPFPDEDESNNILAQIRKGVKLKKVQKEALRESFTLLPDTDPLTRSIHEALRRIKEASPESEDEEESLPCTDWEN.

A disordered region spans residues 49 to 91 (RTAQRQRSADKAGGRSPARQQQRDSPAQSPARKAREEPEEGEE). The segment covering 66–76 (ARQQQRDSPAQ) has biased composition (polar residues). Coiled coils occupy residues 190-225 (SELRHKGYEEGLQRARKRLQELLEKHKTTEVMVDLL), 359-385 (RAKEICLEQKKHALKDQMQSLQGGTEA), and 416-487 (LLLT…AKKA). Disordered regions lie at residues 518 to 537 (QLKQEKQEDEEERKSTWVSQ), 558 to 632 (VLKS…ITSE), and 652 to 688 (STLQPSSLPASPPPPPPPLPPPPPPPLPPSKQDTDTL). A compositionally biased stretch (basic residues) spans 562–574 (TRLRFSHERRRST). 2 stretches are compositionally biased toward polar residues: residues 582–596 (DAPQSLSVSIQTQGL) and 613–630 (PETTTQLEDSSLPPNAIT). The segment covering 661 to 680 (ASPPPPPPPLPPPPPPPLPP) has biased composition (pro residues). The region spanning 776 to 793 (ESNNILAQIRKGVKLKKV) is the WH2 domain. The tract at residues 821-843 (RIKEASPESEDEEESLPCTDWEN) is disordered. Residues 827 to 843 (PESEDEEESLPCTDWEN) are compositionally biased toward acidic residues.

Belongs to the JMY family.

The protein localises to the nucleus. Its subcellular location is the cytoplasmic vesicle. The protein resides in the cytoplasm. It is found in the cytoskeleton. It localises to the endomembrane system. The protein localises to the autophagosome membrane. Its function is as follows. Acts both as a nuclear p53/TP53-cofactor and a cytoplasmic regulator of actin dynamics depending on conditions. In nucleus, acts as a cofactor that increases p53/TP53 response. Increases p53/TP53-dependent transcription and apoptosis, suggesting an important role in p53/TP53 stress response such as DNA damage. In cytoplasm, acts as a nucleation-promoting factor for both branched and unbranched actin filaments. Activates the Arp2/3 complex to induce branched actin filament networks. Also catalyzes actin polymerization in the absence of Arp2/3, creating unbranched filaments. Contributes to cell motility by controlling actin dynamics. The chain is Junction-mediating and -regulatory protein (jmy) from Xenopus tropicalis (Western clawed frog).